The sequence spans 351 residues: Dysbindin (351 aa).

A Phosphoserine modification is found at serine 11. Positions 88 to 181 (EKKKTSLVEL…ELDAEHAQKV (94 aa)) form a coiled coil. Positions 173–331 (LDAEHAQKVL…DEEEVQVDTA (159 aa)) are dysbindin. The short motif at 243-256 (LMDISDQEALDVFL) is the Nuclear export signal element. The disordered stretch occupies residues 286–351 (PNPSELRAKP…TPDGGEDSDS (66 aa)). Polar residues predominate over residues 296 to 305 (PSSSSTCTDS). Serine 316, serine 321, and serine 349 each carry phosphoserine.

Belongs to the dysbindin family. In terms of assembly, interacts (via its coiled coil domain) with KXD1. Interacts with CMYA5, PI4K2 and RNF151. Component of the biogenesis of lysosome-related organelles complex 1 (BLOC-1) composed of at least BLOC1S1, BLOC1S2, BLOC1S3, BLOC1S4, BLOC1S5, BLOC1S6, DTNBP1/BLOC1S7 and SNAPIN/BLOC1S8. Interacts directly in the complex with BLOC1S5, BLOC1S6 and SNAPIN/BLOC1S8. The BLOC-1 complex associates with the AP-3 protein complex and membrane protein cargos. This BLOC-1 complex also associates with the BLOC-2 complex in endosomes. Binds to DTNA and DTNB but may not be a physiological binding partner. Interacts (isoform 1 and isoform 2 only) with the DNA-dependent protein kinase complex DNA-PK; the interaction phosphorylates DTNBP1 in vitro. Interacts directly in this complex with XRCC5 and XRCC6. Interacts with AP3M1, AP3B2 and TRIM32. Interacts with XPO1; the interaction exports DTNBP1 out of the nucleus. Ubiquitinated by TRIM32. Ubiquitination leads to DTNBP1 degradation. In terms of processing, isoforms 1 and 2 highly phosphorylated by PRKDC in vitro. Isoform 3 only weakly phosphorylated by PRKDC in vitro. As to expression, detected in brain, in neurons and in neuropil. Isoform 1 is expressed in the cerebral cortex, and hippocampal frontal (HF). Specific expression in the posterior half of the superior temporal gyrus (pSTG). Higher expression of isoform 2 and 3 in the HF than in the pSTG while isoform 1 shows no difference in expression in these areas. In the HF, detected in dentate gyrus (DG) and in pyramidal cells of hippocampus CA2 and CA3 (at protein level). Expressed in all principal neuronal populations of the HF, namely pyramidal neurons in the subiculum and CA1-3, granule cells in the dense cell layer of the DG (DGg), and polymorph cells in the hilus of the DG (DGh). Maximal levels in CA2, CA3, and DGh. Isoform 2 not expressed in the cerebral cortex.

Its subcellular location is the cytoplasm. The protein localises to the cytoplasmic vesicle membrane. The protein resides in the endosome membrane. It localises to the melanosome membrane. It is found in the postsynaptic density. Its subcellular location is the endoplasmic reticulum. The protein localises to the nucleus. The protein resides in the cytoplasmic vesicle. It localises to the secretory vesicle. It is found in the synaptic vesicle membrane. Its subcellular location is the postsynaptic cell membrane. In terms of biological role, component of the BLOC-1 complex, a complex that is required for normal biogenesis of lysosome-related organelles (LRO), such as platelet dense granules and melanosomes. In concert with the AP-3 complex, the BLOC-1 complex is required to target membrane protein cargos into vesicles assembled at cell bodies for delivery into neurites and nerve terminals. The BLOC-1 complex, in association with SNARE proteins, is also proposed to be involved in neurite extension. Associates with the BLOC-2 complex to facilitate the transport of TYRP1 independent of AP-3 function. Plays a role in synaptic vesicle trafficking and in neurotransmitter release. Plays a role in the regulation of cell surface exposure of DRD2. May play a role in actin cytoskeleton reorganization and neurite outgrowth. May modulate MAPK8 phosphorylation. Appears to promote neuronal transmission and viability through regulating the expression of SNAP25 and SYN1, modulating PI3-kinase-Akt signaling and influencing glutamatergic release. Regulates the expression of SYN1 through binding to its promoter. Modulates prefrontal cortical activity via the dopamine/D2 pathway. The protein is Dysbindin (DTNBP1) of Homo sapiens (Human).